We begin with the raw amino-acid sequence, 1534 residues long: MDQDPRKDNPVEMDVDRDDSSQDPDDNESFKSALDEPLDLKELYQDALEKPSEEPSEELNDQVSTPAALTARAYQLEMFEASLKQNIIVALFSDRVMVADGHWQWQDSGRIWFLTPTVALARQQHRVLQSQIPSVKAIMLCGQDGVDSWSEQAVWDAVLLNVRIVVSTYQILFDANAHSFVRLDSLSLIVIDEAHNCSGSHPIARLMTEAYLPAKKAGLPVPSILGLTASPLKSNNLADIEKLEQVLDAVCRTPTIHREELLAHVNRPEMLVVSYGDSGTDPTPTDLMTRFLEAYHRLDISKDPDVLLLKAQRTERAREKLRQMITKKDTLAQKELRGVYNRALLVRREIGPWAADYYLTRTVSHMLAELERGEPPAQHRYIGEALRSIPIPAISKEPIQLSPKVQTLLKVLASHQQDPVGIVFVKERVMVSIVTHIISTHPLTKDRYRTASMIGTASVPGKARNHMDMTKKEDMTSLEGFRLGRFNLLVATSVLEEGIDVPICNLVICFDEPSNIKSFIQRRGRAREVSSTLYLMVQNASSESATDWHNLERLMKERYEDEMRQNAELELLDDPRIGSYPVLEVESTGARMTIRDARSHLNHFCAKVSSRSRYLQKEPYFVIRQVNPDPASPGRRTLLQATVHLPASLAPDLRRHESLWTWTSEKLAIMDASFQAYKALYNAGLVNENLLPTKVSDFLADLGDDPGHIWVKTQFDPWPEVAYAWQESSSLYSRRLTVLVPGVENPLEFEFILPVPVPYMAPLKLWWNATSALTLITSPEMQEFRKQEGTSAGPDHSYALLAMAFAHRFPIQGRQYPIRLVSTRRKLDVDGIAALEFDPRLYESSPQPPLVRLVDGRNMPYFVTKILPSKPPVELISKPSTDHADLPENVPYVVCKPIGKAVGQFIPLDAAQDQDSWTPKNGKLYRKVLPSTQIRMDNFPAVFAQVGAVIPAFTRAVEMSLVAADLMYNRLGCLQLDNLPLITTALISSGSRGPTNYERLEFIGDTILKFCACLTASALFPNHHERLLSQWKDKLVNNVRLCRASRDFGLDEYIINSAASKKWRPKFVEDYMDEMKSPISAETRQMSSKMVADVVESLIGAAYMCGGMSKALECVALLLPTPKSSQFKWQEIELSRTQLFEFAPKDAILSKQLEPLEKAMDYTFNKKSLLIEAMTHPSCAGLGTNESCYERLEFLGDAILDVIVVKRLMAETGPNELAHNDMHEHLSSVVTADIMAFLAMEWVIMQTDINEIDPTNLDALGLLPSSQSRITPASLVSNKEDWPFWRFMRHNSPQVGATQTATIERYLTLRDEIRDAIWKHNTLPWALLARMGPQKFYSDIVESLIGAVWVDSGSWKACEDVLTQMGLLPLLDHLLETKAHVMHPNVELQILAPPNKRATRTEFVIISNKRGIISSGTEFLDEPSAVDDGLVSVEPYDDTPEHDEVFSCKLFVGGKQVADVTGAATKEEARVRAAEKGCLVIKAERKVWNEAKAAAKEDKGHNTENGDANADNGQSGEKEEVPDCRDADGDTVMN.

Over residues 1–10 (MDQDPRKDNP) the composition is skewed to basic and acidic residues. The interval 1–36 (MDQDPRKDNPVEMDVDRDDSSQDPDDNESFKSALDE) is disordered. Residues 11 to 27 (VEMDVDRDDSSQDPDDN) are compositionally biased toward acidic residues. Residues 65 to 249 (TPAALTARAY…IEKLEQVLDA (185 aa)) enclose the Helicase ATP-binding domain. Residue 78-85 (MFEASLKQ) participates in ATP binding. The DEAH box motif lies at 192–195 (DEAH). Residues 404 to 575 (KVQTLLKVLA…NAELELLDDP (172 aa)) form the Helicase C-terminal domain. In terms of domain architecture, Dicer dsRNA-binding fold spans 597-700 (ARSHLNHFCA…LPTKVSDFLA (104 aa)). RNase III domains follow at residues 959 to 1107 (MSLV…MCGG) and 1153 to 1353 (LEPL…VDSG). Mg(2+) contacts are provided by E1193, D1339, and E1342. Residues 1383 to 1483 (HPNVELQILA…AEKGCLVIKA (101 aa)) enclose the DRBM domain. Over residues 1492-1504 (KAAAKEDKGHNTE) the composition is skewed to basic and acidic residues. The interval 1492-1534 (KAAAKEDKGHNTENGDANADNGQSGEKEEVPDCRDADGDTVMN) is disordered. Residues 1505-1515 (NGDANADNGQS) are compositionally biased toward polar residues. The segment covering 1516 to 1528 (GEKEEVPDCRDAD) has biased composition (basic and acidic residues).

Belongs to the helicase family. Dicer subfamily. Mg(2+) serves as cofactor. It depends on Mn(2+) as a cofactor.

In terms of biological role, dicer-like endonuclease involved in cleaving double-stranded RNA in the RNA interference (RNAi) pathway. Produces 21 to 25 bp dsRNAs (siRNAs) which target the selective destruction of homologous RNAs leading to sequence-specific suppression of gene expression, called post-transcriptional gene silencing (PTGS). Part of a broad host defense response against viral infection and transposons. Controls the expression of the non-LTR retrotransposon Tad in the African strain, Adiomopoume. The protein is Dicer-like protein 2 (dcl-2) of Neurospora crassa (strain ATCC 24698 / 74-OR23-1A / CBS 708.71 / DSM 1257 / FGSC 987).